The following is an 874-amino-acid chain: Bifunctional uridylyltransferase/uridylyl-removing enzyme (874 aa).

Residues 1–332 (MTLQSPLTFR…NGGASEDAEI (332 aa)) are uridylyltransferase. A uridylyl-removing region spans residues 333 to 692 (IDEDFQRRGA…ISKKATRGGT (360 aa)). An HD domain is found at 451–573 (VDEHSIRLLK…VRDEEYLEYL (123 aa)). 2 ACT domains span residues 693–777 (EVFV…RTPN) and 800–874 (LMEF…SVSA).

This sequence belongs to the GlnD family. It depends on Mg(2+) as a cofactor.

The enzyme catalyses [protein-PII]-L-tyrosine + UTP = [protein-PII]-uridylyl-L-tyrosine + diphosphate. It catalyses the reaction [protein-PII]-uridylyl-L-tyrosine + H2O = [protein-PII]-L-tyrosine + UMP + H(+). With respect to regulation, uridylyltransferase (UTase) activity is inhibited by glutamine, while glutamine activates uridylyl-removing (UR) activity. Modifies, by uridylylation and deuridylylation, the PII regulatory proteins (GlnB and homologs), in response to the nitrogen status of the cell that GlnD senses through the glutamine level. Under low glutamine levels, catalyzes the conversion of the PII proteins and UTP to PII-UMP and PPi, while under higher glutamine levels, GlnD hydrolyzes PII-UMP to PII and UMP (deuridylylation). Thus, controls uridylylation state and activity of the PII proteins, and plays an important role in the regulation of nitrogen assimilation and metabolism. This chain is Bifunctional uridylyltransferase/uridylyl-removing enzyme, found in Vibrio campbellii (strain ATCC BAA-1116).